The sequence spans 938 residues: Microperfuranone synthase (938 aa).

The segment at 44 to 445 is adenylation (A) domain; it reads TSTRISYAEL…AGRTKDTIIV (402 aa). Residues 579–655 enclose the Carrier domain; the sequence is SDSERAVQKA…AIARSIDSSR (77 aa). A thiolation and peptide carrier (T) domain region spans residues 581 to 652; that stretch reads SERAVQKALV…TPGAIARSID (72 aa). Residue Ser-613 is modified to O-(pantetheine 4'-phosphoryl)serine. The segment at 676–923 is thioesterase (TE) domain; sequence PLFCIHPGSG…AKMLNREHIA (248 aa). Ser-746 is a catalytic residue.

Belongs to the ATP-dependent AMP-binding enzyme family.

It functions in the pathway secondary metabolite biosynthesis. Microperfuranone synthase is the only protein required for the biosynthesis of the secondary metabolite microperfuranone from phenylpyruvic acid (PPA). Several steps for the microperfuranione biosynthesis have been proposed. These steps include the activation of PPA, by the micA adenylation (A) domain to AMP-phenylpyruvic acid followed by loading of the PPA unit to the thiolation and peptide carrier (T) domain and eventually transferring to the thioesterase (TE) domain. After loading another PPA unit onto the T domain, aldol condensation establishes the carbon-carbon bond between the alpha- and beta-carbon of the two PPA units. Sulfur-assisted furan ring formation, TE domain mediated hydrolysis, decarboxylation, and keto-enol tautomerization would generate microperfuranone attached to the T domain. Finally, microperfuranone is released by the TE domain. The chain is Microperfuranone synthase from Emericella nidulans (strain FGSC A4 / ATCC 38163 / CBS 112.46 / NRRL 194 / M139) (Aspergillus nidulans).